The following is a 334-amino-acid chain: GTP 3',8-cyclase (334 aa).

A Radical SAM core domain is found at 11 to 235 (GFNRKVDYLR…VESAESSQGP (225 aa)). Residue Arg-20 coordinates GTP. The [4Fe-4S] cluster site is built by Cys-27 and Cys-31. Tyr-33 contacts S-adenosyl-L-methionine. Residue Cys-34 coordinates [4Fe-4S] cluster. Arg-69 is a GTP binding site. Position 73 (Gly-73) interacts with S-adenosyl-L-methionine. Thr-100 provides a ligand contact to GTP. Ser-124 serves as a coordination point for S-adenosyl-L-methionine. Lys-161 contributes to the GTP binding site. Residue Met-195 participates in S-adenosyl-L-methionine binding. Residues Cys-260 and Cys-263 each contribute to the [4Fe-4S] cluster site. 265–267 (RVR) is a GTP binding site. Cys-277 lines the [4Fe-4S] cluster pocket.

This sequence belongs to the radical SAM superfamily. MoaA family. In terms of assembly, monomer and homodimer. The cofactor is [4Fe-4S] cluster.

The enzyme catalyses GTP + AH2 + S-adenosyl-L-methionine = (8S)-3',8-cyclo-7,8-dihydroguanosine 5'-triphosphate + 5'-deoxyadenosine + L-methionine + A + H(+). It participates in cofactor biosynthesis; molybdopterin biosynthesis. Its function is as follows. Catalyzes the cyclization of GTP to (8S)-3',8-cyclo-7,8-dihydroguanosine 5'-triphosphate. This chain is GTP 3',8-cyclase, found in Pseudomonas entomophila (strain L48).